A 188-amino-acid polypeptide reads, in one-letter code: Probable chorismate pyruvate-lyase (188 aa).

The substrate site is built by Arg77, Leu115, and Glu174.

It belongs to the UbiC family.

It localises to the cytoplasm. It carries out the reaction chorismate = 4-hydroxybenzoate + pyruvate. It functions in the pathway cofactor biosynthesis; ubiquinone biosynthesis. In terms of biological role, removes the pyruvyl group from chorismate, with concomitant aromatization of the ring, to provide 4-hydroxybenzoate (4HB) for the ubiquinone pathway. In Shewanella loihica (strain ATCC BAA-1088 / PV-4), this protein is Probable chorismate pyruvate-lyase.